Here is a 122-residue protein sequence, read N- to C-terminus: Large ribosomal subunit protein bL12 (122 aa).

This sequence belongs to the bacterial ribosomal protein bL12 family. As to quaternary structure, homodimer. Part of the ribosomal stalk of the 50S ribosomal subunit. Forms a multimeric L10(L12)X complex, where L10 forms an elongated spine to which 2 to 4 L12 dimers bind in a sequential fashion. Binds GTP-bound translation factors.

In terms of biological role, forms part of the ribosomal stalk which helps the ribosome interact with GTP-bound translation factors. Is thus essential for accurate translation. This is Large ribosomal subunit protein bL12 from Staphylococcus saprophyticus subsp. saprophyticus (strain ATCC 15305 / DSM 20229 / NCIMB 8711 / NCTC 7292 / S-41).